Reading from the N-terminus, the 419-residue chain is Zinc finger CCCH domain-containing protein 62 (419 aa).

The segment at 89 to 116 adopts a C3H1-type zinc-finger fold; sequence SLRKWVCKYWKDGKCKRGEQCQFLHSWS. WD repeat units lie at residues 129–168, 210–247, 256–293, 296–335, and 383–419; these read GHNK…CVHS, GVVG…ESDP, GHSG…CIMT, QHTG…KVVQ, and FSTH…GNKV.

This Arabidopsis thaliana (Mouse-ear cress) protein is Zinc finger CCCH domain-containing protein 62 (ZFWD4).